The following is a 400-amino-acid chain: CCA-adding enzyme (400 aa).

Glycine 28 and arginine 31 together coordinate ATP. Residues glycine 28 and arginine 31 each contribute to the CTP site. Residues aspartate 41 and aspartate 43 each coordinate Mg(2+). The ATP site is built by arginine 112, aspartate 155, arginine 158, arginine 161, and arginine 164. Positions 112, 155, 158, 161, and 164 each coordinate CTP.

It belongs to the tRNA nucleotidyltransferase/poly(A) polymerase family. Bacterial CCA-adding enzyme type 3 subfamily. In terms of assembly, homodimer. Requires Mg(2+) as cofactor.

The catalysed reaction is a tRNA precursor + 2 CTP + ATP = a tRNA with a 3' CCA end + 3 diphosphate. The enzyme catalyses a tRNA with a 3' CCA end + 2 CTP + ATP = a tRNA with a 3' CCACCA end + 3 diphosphate. In terms of biological role, catalyzes the addition and repair of the essential 3'-terminal CCA sequence in tRNAs without using a nucleic acid template. Adds these three nucleotides in the order of C, C, and A to the tRNA nucleotide-73, using CTP and ATP as substrates and producing inorganic pyrophosphate. tRNA 3'-terminal CCA addition is required both for tRNA processing and repair. Also involved in tRNA surveillance by mediating tandem CCA addition to generate a CCACCA at the 3' terminus of unstable tRNAs. While stable tRNAs receive only 3'-terminal CCA, unstable tRNAs are marked with CCACCA and rapidly degraded. This is CCA-adding enzyme from Staphylococcus aureus (strain Mu3 / ATCC 700698).